The following is a 128-amino-acid chain: Fluoride-specific ion channel FluC (128 aa).

4 consecutive transmembrane segments (helical) span residues 4–24 (LLLV…VGVQ), 37–57 (TFIV…WLAL), 72–92 (VGVM…ALMI), and 101–121 (FTYT…GLLI). Residues Gly76 and Thr79 each contribute to the Na(+) site.

The protein belongs to the fluoride channel Fluc/FEX (TC 1.A.43) family.

It localises to the cell inner membrane. It carries out the reaction fluoride(in) = fluoride(out). Na(+) is not transported, but it plays an essential structural role and its presence is essential for fluoride channel function. In terms of biological role, fluoride-specific ion channel. Important for reducing fluoride concentration in the cell, thus reducing its toxicity. The polypeptide is Fluoride-specific ion channel FluC (Caulobacter sp. (strain K31)).